The following is a 378-amino-acid chain: Cytochrome P450 monooxygenase pytD (378 aa).

C321 serves as a coordination point for heme.

It belongs to the cytochrome P450 family. Requires heme as cofactor.

The protein operates within secondary metabolite biosynthesis. Functionally, cytochrome P450 monooxygenase pytD; part of the gene cluster that mediates the biosynthesis of pyranterreones, a family of antioxidative compounds. The first step of pyranonigrins biosynthesis is performed by the hybrid PKS-NRPS synthetase pytA that condenses 4 malonyl-CoA units ato the acetyl starter unit by the modular PKS of pytA. The acyl chain is then connected to an L-serine through the amide bond by the modular NRPS of pytA. A tetramic acid is formed and released from the PKS-NRPS pytA to give pyranterreone 5 with the help of the thioesterase pytI. Pyranterreone 5 could be methylated by pytC to afford pyranterreone 6. Both pyranterreones 5 and 6 are subsequently oxidized by the FAD-linked oxidoreductase pytB and the cytochrome P450 monooxygenase pytD to form the fused gamma-pyrone core, resulting in pyranterreones 7 and 11, respectively. The hydroxy group at C-8 of pyranterreones 7 and 11 are dehydrated by the aspartyl protease pytH to form a delta-7 double bond to give pyranterreones 3 and 1, 2 accordingly. The exo-methylene of pyranterreone 3 could be reduced into a pendant methyl by reductase pytE to provide pyranterreone 4, also known as cordylactam. Pyranterreone 4 can be reconverted to pyranterreone 3 through pytB-catalyzed dehydrogenation or further oxidized to pyranterreones 9 and 10. The polypeptide is Cytochrome P450 monooxygenase pytD (Aspergillus terreus (strain NIH 2624 / FGSC A1156)).